We begin with the raw amino-acid sequence, 266 residues long: MKLSLSPPPYADAPVVVLISGLGGSGSYWLPQLAVLVQEYQVVCYDQRGTGNNPDTLAEDYSIAQMAAELHQALVAAGIERYAVVGHALGALVGMQLALDYPASVTVLVSVNGWLRINAHTRRCFQVREQLLHSGGAQAWVEAQPLFLYPADWMAARAPRLEAEDALALAHFQGKNNLLRRLNALKRADFSHHADRIRCPVQIICASDDLLVPTACSSELHAALPDSQKMVMRYGGHACNVTDPETFNALLLNGLASLLHHREAAL.

The protein belongs to the AB hydrolase superfamily. Hydrolase RutD family.

It carries out the reaction carbamate + 2 H(+) = NH4(+) + CO2. In terms of biological role, involved in pyrimidine catabolism. May facilitate the hydrolysis of carbamate, a reaction that can also occur spontaneously. The chain is Putative carbamate hydrolase RutD from Escherichia coli O45:K1 (strain S88 / ExPEC).